The sequence spans 99 residues: Nucleoid-associated protein EbfC (99 aa).

It belongs to the YbaB/EbfC family. Homodimer.

It localises to the cytoplasm. Its subcellular location is the nucleoid. Its function is as follows. Binds to DNA and alters its conformation. May be involved in regulation of gene expression, nucleoid organization and DNA protection. The sequence is that of Nucleoid-associated protein EbfC from Borrelia turicatae (strain 91E135).